The chain runs to 629 residues: Glutamyl-tRNA(Gln) amidotransferase subunit E (629 aa).

Residues P405–K426 are disordered.

It belongs to the GatB/GatE family. GatE subfamily. In terms of assembly, heterodimer of GatD and GatE.

The catalysed reaction is L-glutamyl-tRNA(Gln) + L-glutamine + ATP + H2O = L-glutaminyl-tRNA(Gln) + L-glutamate + ADP + phosphate + H(+). Functionally, allows the formation of correctly charged Gln-tRNA(Gln) through the transamidation of misacylated Glu-tRNA(Gln) in organisms which lack glutaminyl-tRNA synthetase. The reaction takes place in the presence of glutamine and ATP through an activated gamma-phospho-Glu-tRNA(Gln). The GatDE system is specific for glutamate and does not act on aspartate. This is Glutamyl-tRNA(Gln) amidotransferase subunit E from Thermococcus sibiricus (strain DSM 12597 / MM 739).